Here is a 158-residue protein sequence, read N- to C-terminus: Large ribosomal subunit protein mL50 (158 aa).

It belongs to the mitochondrion-specific ribosomal protein mL50 family. Component of the mitochondrial large ribosomal subunit (mt-LSU). Mature mammalian 55S mitochondrial ribosomes consist of a small (28S) and a large (39S) subunit. The 28S small subunit contains a 12S ribosomal RNA (12S mt-rRNA) and 30 different proteins. The 39S large subunit contains a 16S rRNA (16S mt-rRNA), a copy of mitochondrial valine transfer RNA (mt-tRNA(Val)), which plays an integral structural role, and 52 different proteins.

It localises to the mitochondrion. This Homo sapiens (Human) protein is Large ribosomal subunit protein mL50 (MRPL50).